Here is a 376-residue protein sequence, read N- to C-terminus: MKKIILVAGGTGGHFFPAVALGEELIKRGYEVHFITDLRCKQYIKQDMKVIFHILDLKRSGNIFLFLPRLSIAVLKAIKLLYNMKPSVTVGFGGYPVIAPMFAAIFLRVPIIIHEQNSYLGKVNKFFASFAKKIAISYAKIKNLPEFAKSKIVVTGGVVRENIRELKVIEMSSRGLTTGSKKSLIKALDSVVKPRNDKLFTIFIFGGSQGAKLFSELIPASIQILMQKQPSLELNIIQQAALDDQVKIKDIYSKLNITYAFAEFFDNMALQYKEADLVISRAGASTIEELTYIGLPAIFIPLPSAADNHQYYNAQLLEDEKTGWCLEQNNISAGKLADKILELISNPKILEDASQNLLKRRKEGHKLLSNLIEEVI.

UDP-N-acetyl-alpha-D-glucosamine-binding positions include T11 to G13, N117, R160, S208, and Q310.

The protein belongs to the glycosyltransferase 28 family. MurG subfamily.

The protein resides in the cell inner membrane. It carries out the reaction di-trans,octa-cis-undecaprenyl diphospho-N-acetyl-alpha-D-muramoyl-L-alanyl-D-glutamyl-meso-2,6-diaminopimeloyl-D-alanyl-D-alanine + UDP-N-acetyl-alpha-D-glucosamine = di-trans,octa-cis-undecaprenyl diphospho-[N-acetyl-alpha-D-glucosaminyl-(1-&gt;4)]-N-acetyl-alpha-D-muramoyl-L-alanyl-D-glutamyl-meso-2,6-diaminopimeloyl-D-alanyl-D-alanine + UDP + H(+). Its pathway is cell wall biogenesis; peptidoglycan biosynthesis. Functionally, cell wall formation. Catalyzes the transfer of a GlcNAc subunit on undecaprenyl-pyrophosphoryl-MurNAc-pentapeptide (lipid intermediate I) to form undecaprenyl-pyrophosphoryl-MurNAc-(pentapeptide)GlcNAc (lipid intermediate II). This chain is UDP-N-acetylglucosamine--N-acetylmuramyl-(pentapeptide) pyrophosphoryl-undecaprenol N-acetylglucosamine transferase, found in Rickettsia conorii (strain ATCC VR-613 / Malish 7).